Consider the following 324-residue polypeptide: Zinc finger C2HC domain-containing protein 1A (324 aa).

A C2HC/C3H-type 1 zinc finger spans residues 15–44 (DLLPCKICGRTFFPLALKKHGPICQKTATK). Zn(2+) is bound by residues Cys-19, Cys-22, His-34, and Cys-38. Residues 43–83 (TKKRKTFDSSRQRAEGTDIPTVKPLKPRPEPPKKPSNWRRK) form a disordered region. Residues 48–58 (TFDSSRQRAEG) show a composition bias toward basic and acidic residues. The C2HC/C3H-type 2 zinc finger occupies 118 to 147 (DYIQCPYCQRRFNENAADRHINFCKEQAAR). Zn(2+) is bound by residues Cys-122, Cys-125, His-137, and Cys-141. The disordered stretch occupies residues 149–225 (SNKGKFSTDS…NKPQTLSPSH (77 aa)). Over residues 176-187 (SNPPGIPSSGSS) the composition is skewed to low complexity. Polar residues-rich tracts occupy residues 188 to 198 (RLPQPSTTSKT) and 206 to 223 (KASS…TLSP). Ser-222 is subject to Phosphoserine. Thr-243 carries the post-translational modification Phosphothreonine. Phosphoserine is present on Ser-291.

The protein belongs to the ZC2HC1 family. It depends on Zn(2+) as a cofactor.

This chain is Zinc finger C2HC domain-containing protein 1A (Zc2hc1a), found in Mus musculus (Mouse).